Consider the following 310-residue polypeptide: Probable cell division protein WhiA (310 aa).

Residues Ser-274 to Lys-308 constitute a DNA-binding region (H-T-H motif).

This sequence belongs to the WhiA family.

Involved in cell division and chromosome segregation. In Lactiplantibacillus plantarum (strain ATCC BAA-793 / NCIMB 8826 / WCFS1) (Lactobacillus plantarum), this protein is Probable cell division protein WhiA.